The chain runs to 481 residues: Long chain base biosynthesis protein 1b (481 aa).

A helical transmembrane segment spans residues 32–52; it reads FGIHIDGHLVVEGLLIAAILF.

It belongs to the class-II pyridoxal-phosphate-dependent aminotransferase family. As to quaternary structure, heterodimer with LCB2. Component of the serine palmitoyltransferase (SPT) complex, composed of LCB1 and LCB2. It depends on pyridoxal 5'-phosphate as a cofactor.

Its subcellular location is the endoplasmic reticulum membrane. It carries out the reaction L-serine + hexadecanoyl-CoA + H(+) = 3-oxosphinganine + CO2 + CoA. It functions in the pathway lipid metabolism; sphingolipid metabolism. In terms of biological role, serine palmitoyltransferase (SPT). The heterodimer formed with LCB2 constitutes the catalytic core. This is Long chain base biosynthesis protein 1b from Oryza sativa subsp. japonica (Rice).